A 1694-amino-acid chain; its full sequence is MRRPPPLGPTTASGPEGNVRNLQKRQAPGPGAAGGCGPEAGGRRENKQKRRMVARATPGRGEVESDKSVAASGAGKAARRRVEGRRGQVSPSDSSDPRGLEAAKEAELPLQTERHTKEKRKVTEASSDDPQPGLDLVRKESLTSSESFQTVECLQSLGKESIIEGIKRRIRNKKLKSLENPPLKITENEATQNIKVEFQDELYKNTPKYSCNILSPEVENNSVLKLRDCNCFPHSKGCNDENNLPYKPDGGCMHVAENFSKKENLRSLAEKSDTNSIPQLLQTEENVMEVNKLLPEESDLYQSKTNGLLSCLQHEKNKYSIEESSVGRKPRKRMKLSEKADETVTEMNFSNEYNKSELMLQENQMIADGKEAETKSPLNVLRKVSHNTVSLMDHLLSVPETVEKETSSEHHVNAVFQKTIEPLLKEETESTSEPLGYESMASKEDFKSMKSFIGKSPNEYHIERRSSREDLRSASEELNLSCQRTIPMTGKRTWPCYSCARISAWCWKKASLPESSYFFPGSQESYRQVDVPKHQTNQTHLTDSKLLLQSSLTETNTESSSKEKLDSNSNCLSSVSAVEPTLMVIKEPIIKDDKKIKSEELSRSGSEVISNTTEDTQLTSETQSLTGNKKKARGNLMKLNLTATSKDGQEANNSAGKTIHRKACIAQQTFIVPDLVKILNTGRLTNFKIPLLKNKTEKRKEVNAKSSEREAYSPLELLDNLSGADIRQNRSKENVSMTMLGPQTLSIRNSVTPVQASSDSFYNKKSYSISPSFTKQGNNSKPSNHVSEPGNIVSNKEVASLTVENNAFSCDPGYVEKSPSFCCNEQETFRPVSSEVRGRKITKNFSEVGFPDILKAYEDDILLIDVIQDDPDLFGVSNEGELSFTSEVPKISQEEPNVAGEHQSTDSKYMETPVKKEPSDDLRELPVLDCGWIKPDICASNSAESEIKHDPKDVNTSLGEVANETSENETLGDFSEQIKGSDLDEKHRFTDKVITKEEKENIYEVCKSKDSRNADIMVGECQFAVPVPKPLCLLVPPLNLSGRQEDTILNTWMNGTICFLNEILLAFGNIETRRFFYQKQKTIKVFQKSLGLMIPYKYCKFHFNTLRGCERPLCKFAHVPEQGDEKVCMDVFKKYININELCLLQRAVNIFMEYYRKFPPGVYFDLQVLNDLLNSLLKHCLLKEVFQIVNLSIMVKMLPSLKILLNIFEYVATMKLRNAVPALIDIFCKLVEAGMVLDPEHFNYIVKLLYQVQASKQEITAVLEMKSRLQMRQFKKNWKCDLHSALNKLEHCKEKGDWTKLGKLYINVKMGCEKFADFQTFCACIAETLTKNYEDERPDIPFCEFAETVSKDPQNSKVDKGVLGRIGISAMCFYHKLLQWSKGRKVLEKLYELKIHFTSLKGLIGPEKLASRCQIVNVAAEIFLKSGSLDGAIWVMRESEWIINTPLWPCDRLDVLNRHNLLCTIAHEILAKSLYRQTFEVLQNLPGFQNSQETVEVSQYSLLFNKLLGSCIESSSLGMSSSVAEFMISKSIPIDFSFLRRLITSLGRSCLWLKARAHYKSALSLGCYPPLEGNLYRKLLLIPSYLSEIEMLLAIEIFMVSNASSIQSPGTSTQILQIVLKRCEDNQSRSSDDYQAAVERLIMAARISDPKLFVKHMTVNVNKEQVYSLEHCSALKWLKENMKWAGKVWLFSNH.

Disordered stretches follow at residues 1–135 (MRRP…PGLD), 322–341 (EESSVGRKPRKRMKLSEKAD), 600–629 (ELSRSGSEVISNTTEDTQLTSETQSLTGNK), and 891–920 (ISQEEPNVAGEHQSTDSKYMETPVKKEPSD). Residues 31-40 (GAAGGCGPEA) show a composition bias toward gly residues. Basic and acidic residues predominate over residues 95–116 (SDPRGLEAAKEAELPLQTERHT). Residues 603–627 (RSGSEVISNTTEDTQLTSETQSLTG) are compositionally biased toward polar residues. Over residues 903–920 (QSTDSKYMETPVKKEPSD) the composition is skewed to basic and acidic residues.

It is found in the cytoplasm. The protein localises to the cytosol. Important for normal spermatogenesis and male fertility. Specifically required for progression to the post-meiotic stages of spermatocyte development. Seems to be necessary for normal expression levels of a number of testis-expressed gene transcripts, although its role in this process is unclear. The sequence is that of Protein TOPAZ1 (TOPAZ1) from Gorilla gorilla gorilla (Western lowland gorilla).